We begin with the raw amino-acid sequence, 296 residues long: Glycine--tRNA ligase alpha subunit (296 aa).

This sequence belongs to the class-II aminoacyl-tRNA synthetase family. As to quaternary structure, tetramer of two alpha and two beta subunits.

Its subcellular location is the cytoplasm. The enzyme catalyses tRNA(Gly) + glycine + ATP = glycyl-tRNA(Gly) + AMP + diphosphate. The chain is Glycine--tRNA ligase alpha subunit from Polynucleobacter necessarius subsp. necessarius (strain STIR1).